A 377-amino-acid chain; its full sequence is Succinyl-diaminopimelate desuccinylase (377 aa).

His68 provides a ligand contact to Zn(2+). The active site involves Asp70. Asp101 is a binding site for Zn(2+). Glu135 serves as the catalytic Proton acceptor. Zn(2+) is bound by residues Glu136, Glu164, and His350.

Belongs to the peptidase M20A family. DapE subfamily. In terms of assembly, homodimer. Zn(2+) serves as cofactor. The cofactor is Co(2+).

The catalysed reaction is N-succinyl-(2S,6S)-2,6-diaminopimelate + H2O = (2S,6S)-2,6-diaminopimelate + succinate. The protein operates within amino-acid biosynthesis; L-lysine biosynthesis via DAP pathway; LL-2,6-diaminopimelate from (S)-tetrahydrodipicolinate (succinylase route): step 3/3. Catalyzes the hydrolysis of N-succinyl-L,L-diaminopimelic acid (SDAP), forming succinate and LL-2,6-diaminopimelate (DAP), an intermediate involved in the bacterial biosynthesis of lysine and meso-diaminopimelic acid, an essential component of bacterial cell walls. The polypeptide is Succinyl-diaminopimelate desuccinylase (Acinetobacter baylyi (strain ATCC 33305 / BD413 / ADP1)).